The chain runs to 364 residues: Probable dual-specificity RNA methyltransferase RlmN (364 aa).

The Proton acceptor role is filled by glutamate 109. The Radical SAM core domain maps to 123–351; it reads PKARLTVCVS…VSVRYSRGLE (229 aa). Cysteines 130 and 356 form a disulfide. [4Fe-4S] cluster-binding residues include cysteine 137, cysteine 141, and cysteine 144. S-adenosyl-L-methionine contacts are provided by residues 184–185, serine 214, 237–239, and asparagine 313; these read GE and SLH. The active-site S-methylcysteine intermediate is cysteine 356.

Belongs to the radical SAM superfamily. RlmN family. [4Fe-4S] cluster is required as a cofactor.

The protein localises to the cytoplasm. It carries out the reaction adenosine(2503) in 23S rRNA + 2 reduced [2Fe-2S]-[ferredoxin] + 2 S-adenosyl-L-methionine = 2-methyladenosine(2503) in 23S rRNA + 5'-deoxyadenosine + L-methionine + 2 oxidized [2Fe-2S]-[ferredoxin] + S-adenosyl-L-homocysteine. The enzyme catalyses adenosine(37) in tRNA + 2 reduced [2Fe-2S]-[ferredoxin] + 2 S-adenosyl-L-methionine = 2-methyladenosine(37) in tRNA + 5'-deoxyadenosine + L-methionine + 2 oxidized [2Fe-2S]-[ferredoxin] + S-adenosyl-L-homocysteine. In terms of biological role, specifically methylates position 2 of adenine 2503 in 23S rRNA and position 2 of adenine 37 in tRNAs. This chain is Probable dual-specificity RNA methyltransferase RlmN, found in Nostoc punctiforme (strain ATCC 29133 / PCC 73102).